The chain runs to 233 residues: Lipoprotein-releasing system ATP-binding protein LolD (233 aa).

The 228-residue stretch at 6–233 (LQCDNLCKRY…TAELSLMGAE (228 aa)) folds into the ABC transporter domain. 42 to 49 (GSSGSGKS) contacts ATP.

The protein belongs to the ABC transporter superfamily. Lipoprotein translocase (TC 3.A.1.125) family. In terms of assembly, the complex is composed of two ATP-binding proteins (LolD) and two transmembrane proteins (LolC and LolE).

The protein localises to the cell inner membrane. Part of the ABC transporter complex LolCDE involved in the translocation of mature outer membrane-directed lipoproteins, from the inner membrane to the periplasmic chaperone, LolA. Responsible for the formation of the LolA-lipoprotein complex in an ATP-dependent manner. This chain is Lipoprotein-releasing system ATP-binding protein LolD, found in Escherichia coli O6:K15:H31 (strain 536 / UPEC).